Consider the following 138-residue polypeptide: uncharacterized protein (138 aa).

Helical transmembrane passes span 17-37 (LIVSTIYIVLFFAILNLTVFF), 43-63 (INLILKNSCVVSFVVVWLLVC), and 117-137 (FWWMNFSLYLLGSLISIVVSL).

It localises to the cell membrane. This is an uncharacterized protein from Mycoplasma pneumoniae (strain ATCC 29342 / M129 / Subtype 1) (Mycoplasmoides pneumoniae).